Here is a 408-residue protein sequence, read N- to C-terminus: uncharacterized protein (408 aa).

Disordered stretches follow at residues 218 to 265 (EPTA…TSER) and 367 to 408 (MESE…ETPN). The span at 369–379 (SEVINSSSSTS) shows a compositional bias: low complexity. Residues 394 to 408 (IVEEVPETAENETPN) show a composition bias toward acidic residues.

It to C.elegans C05E11.1.

This is an uncharacterized protein from Arabidopsis thaliana (Mouse-ear cress).